Reading from the N-terminus, the 338-residue chain is Ketol-acid reductoisomerase (NADP(+)) (338 aa).

Residues 1 to 181 (MKIYYDKDCN…GGGRAGIIET (181 aa)) enclose the KARI N-terminal Rossmann domain. Residues 24–27 (YGSQ), K47, S50, S52, and 82–85 (DEIQ) contribute to the NADP(+) site. H107 is an active-site residue. An NADP(+)-binding site is contributed by G133. One can recognise a KARI C-terminal knotted domain in the interval 182–327 (SFKEETETDL…ARLRSMMSWI (146 aa)). Mg(2+) is bound by residues D190, E194, E226, and E230. S251 provides a ligand contact to substrate.

The protein belongs to the ketol-acid reductoisomerase family. Requires Mg(2+) as cofactor.

It catalyses the reaction (2R)-2,3-dihydroxy-3-methylbutanoate + NADP(+) = (2S)-2-acetolactate + NADPH + H(+). The enzyme catalyses (2R,3R)-2,3-dihydroxy-3-methylpentanoate + NADP(+) = (S)-2-ethyl-2-hydroxy-3-oxobutanoate + NADPH + H(+). Its pathway is amino-acid biosynthesis; L-isoleucine biosynthesis; L-isoleucine from 2-oxobutanoate: step 2/4. It participates in amino-acid biosynthesis; L-valine biosynthesis; L-valine from pyruvate: step 2/4. In terms of biological role, involved in the biosynthesis of branched-chain amino acids (BCAA). Catalyzes an alkyl-migration followed by a ketol-acid reduction of (S)-2-acetolactate (S2AL) to yield (R)-2,3-dihydroxy-isovalerate. In the isomerase reaction, S2AL is rearranged via a Mg-dependent methyl migration to produce 3-hydroxy-3-methyl-2-ketobutyrate (HMKB). In the reductase reaction, this 2-ketoacid undergoes a metal-dependent reduction by NADPH to yield (R)-2,3-dihydroxy-isovalerate. This chain is Ketol-acid reductoisomerase (NADP(+)), found in Geobacter sulfurreducens (strain ATCC 51573 / DSM 12127 / PCA).